Reading from the N-terminus, the 714-residue chain is Polyribonucleotide nucleotidyltransferase (714 aa).

Mg(2+)-binding residues include Asp488 and Asp494. A KH domain is found at 555–614 (PRIEVMNIPVDKIREVIGSGGKVIREIVEKTGAKINIDDDGTVKIASASGKEIEAARKWI). Residues 624–692 (GQVYEGTVVK…ERGKVRLSMK (69 aa)) enclose the S1 motif domain.

Belongs to the polyribonucleotide nucleotidyltransferase family. Requires Mg(2+) as cofactor.

It is found in the cytoplasm. The catalysed reaction is RNA(n+1) + phosphate = RNA(n) + a ribonucleoside 5'-diphosphate. In terms of biological role, involved in mRNA degradation. Catalyzes the phosphorolysis of single-stranded polyribonucleotides processively in the 3'- to 5'-direction. The sequence is that of Polyribonucleotide nucleotidyltransferase from Sinorhizobium medicae (strain WSM419) (Ensifer medicae).